A 652-amino-acid chain; its full sequence is DNA ligase (652 aa).

Residues aspartate 29 to aspartate 33, serine 78 to leucine 79, and glutamate 107 contribute to the NAD(+) site. Lysine 109 serves as the catalytic N6-AMP-lysine intermediate. NAD(+) is bound by residues arginine 130, glutamate 164, lysine 278, and lysine 302. 4 residues coordinate Zn(2+): cysteine 395, cysteine 398, cysteine 413, and cysteine 418. In terms of domain architecture, BRCT spans valine 577–leucine 652.

The protein belongs to the NAD-dependent DNA ligase family. LigA subfamily. It depends on Mg(2+) as a cofactor. Mn(2+) serves as cofactor.

The enzyme catalyses NAD(+) + (deoxyribonucleotide)n-3'-hydroxyl + 5'-phospho-(deoxyribonucleotide)m = (deoxyribonucleotide)n+m + AMP + beta-nicotinamide D-nucleotide.. Its function is as follows. DNA ligase that catalyzes the formation of phosphodiester linkages between 5'-phosphoryl and 3'-hydroxyl groups in double-stranded DNA using NAD as a coenzyme and as the energy source for the reaction. It is essential for DNA replication and repair of damaged DNA. This Streptococcus pneumoniae (strain JJA) protein is DNA ligase.